The primary structure comprises 325 residues: MKRTDSTAKATAPNPPLAPLLVILGNTGSGKSALALKLAREIPAGIVNADSRQIYSQMDIATAKPTPAEMSEIPHYLYSFIQPDQPFSLAEYQSLAYQAINKLHTQNRLPILVGGSGQYLKAVLEGWSIPQIAPDETFRAAMFEKAEKEGGASIFAELVKQDPQAAAKIDPRNIRRVVRALEVINKTGAEFSKLQTKNPPPYRVLKIGIHLAREELYRTVDLRVGKMLEQGLEAEVRHLLEQGYAATLPSMSGIGYRQIAKYIGGEISLSEAIEQMQFETHRLIRQQNTYFRLADPDIHWITLEESMDSGIINLVRNFLADGGKE.

Residue 25 to 32 participates in ATP binding; sequence GNTGSGKS. Substrate is bound at residue 27–32; the sequence is TGSGKS. Residues 50-53 are interaction with substrate tRNA; that stretch reads DSRQ.

The protein belongs to the IPP transferase family. In terms of assembly, monomer. It depends on Mg(2+) as a cofactor.

The enzyme catalyses adenosine(37) in tRNA + dimethylallyl diphosphate = N(6)-dimethylallyladenosine(37) in tRNA + diphosphate. Catalyzes the transfer of a dimethylallyl group onto the adenine at position 37 in tRNAs that read codons beginning with uridine, leading to the formation of N6-(dimethylallyl)adenosine (i(6)A). The protein is tRNA dimethylallyltransferase of Dehalococcoides mccartyi (strain ATCC BAA-2266 / KCTC 15142 / 195) (Dehalococcoides ethenogenes (strain 195)).